The chain runs to 224 residues: Small ribosomal subunit protein uS2 (224 aa).

The segment covering 1–14 (MAEAKPAPEKEAAV) has biased composition (basic and acidic residues). Positions 1–32 (MAEAKPAPEKEAAVKTESVPVADDEAASAKEG) are disordered.

It belongs to the universal ribosomal protein uS2 family.

This Methanosarcina mazei (strain ATCC BAA-159 / DSM 3647 / Goe1 / Go1 / JCM 11833 / OCM 88) (Methanosarcina frisia) protein is Small ribosomal subunit protein uS2.